A 428-amino-acid polypeptide reads, in one-letter code: Adenylosuccinate synthetase (428 aa).

GTP-binding positions include 12 to 18 (GDEGKGK) and 40 to 42 (GHT). The Proton acceptor role is filled by Asp13. Asp13 and Gly40 together coordinate Mg(2+). IMP-binding positions include 13–16 (DEGK), 38–41 (NAGH), Thr130, Arg144, Gln225, Thr240, and Arg304. His41 serves as the catalytic Proton donor. 300–306 (VNTGRSR) is a binding site for substrate. GTP contacts are provided by residues Arg306, 332–334 (KID), and 414–416 (GVG).

It belongs to the adenylosuccinate synthetase family. As to quaternary structure, homodimer. Mg(2+) serves as cofactor.

The protein localises to the cytoplasm. It carries out the reaction IMP + L-aspartate + GTP = N(6)-(1,2-dicarboxyethyl)-AMP + GDP + phosphate + 2 H(+). The protein operates within purine metabolism; AMP biosynthesis via de novo pathway; AMP from IMP: step 1/2. Functionally, plays an important role in the de novo pathway of purine nucleotide biosynthesis. Catalyzes the first committed step in the biosynthesis of AMP from IMP. The protein is Adenylosuccinate synthetase of Clostridium beijerinckii (strain ATCC 51743 / NCIMB 8052) (Clostridium acetobutylicum).